The primary structure comprises 240 residues: Adenylate dimethylallyltransferase (240 aa).

Belongs to the isopentenyl transferase family.

The catalysed reaction is dimethylallyl diphosphate + AMP = N(6)-(dimethylallyl)adenosine 5'-phosphate + diphosphate. Its function is as follows. Transfers dimethylallyl groups to AMP as part of the biosynthesis of cytokinin phytohormones. The sequence is that of Adenylate dimethylallyltransferase (izt) from Agrobacterium fabrum (strain C58 / ATCC 33970) (Agrobacterium tumefaciens (strain C58)).